Consider the following 478-residue polypeptide: MALAPHSNFLANHETIKYYVGSKLPGHKRFSWGWEDYFGSIVVAKICSSRRIPRYFRKSPRICCGLDSRGLQLFSHGKHNLSPAHSINQNVPKGNSGCKFPKDVALMVWEKWGQFAKTAIVAIFILSVASKADAVDALKTCTCLLKECRLELAKCISNPACAANVACLQTCNNRPDETECQIKCGDLFENSVVDEFNECAVSRKKCVPRKSDVGDFPVPDPSVLVQKFDMKDFSGKWFITRGLNPTFDAFDCQLHEFHTEENKLVGNLSWRIRTPDGGFFTRSAVQKFVQDPKYPGILYNHDNEYLLYQDDWYILSSKVENSPEDYIFVYYKGRNDAWDGYGGSVLYTRSAVLPESIIPELQTAAQKVGRDFNTFIKTDNTCGPEPPLVERLEKKVEEGERTIIKEVEEIEEEVEKVRDKEVTLFSKLFEGFKELQRDEENFLRELSKEEMDVLDGLKMEATEVEKLFGRALPIRKLR.

Residues 388–453 (LVERLEKKVE…RELSKEEMDV (66 aa)) are a coiled coil.

The protein belongs to the calycin superfamily. Lipocalin family.

The protein localises to the plastid. It is found in the chloroplast thylakoid membrane. It catalyses the reaction all-trans-violaxanthin + 2 L-ascorbate = all-trans-zeaxanthin + 2 L-dehydroascorbate + 2 H2O. In terms of biological role, part of the xanthophyll (or violaxanthin) cycle for controlling the concentration of zeaxanthin in chloroplasts. Catalyzes the two-step mono de-epoxidation reaction. Stereospecific for all-trans xanthophylls. Zeaxanthin induces the dissipation of excitation energy in the chlorophyll of the light-harvesting protein complex of photosystem II. In Nicotiana tabacum (Common tobacco), this protein is Violaxanthin de-epoxidase, chloroplastic (VDE1).